The sequence spans 302 residues: Pyridoxal 5'-phosphate synthase subunit PdxS (302 aa).

Position 32 (Asp32) interacts with D-ribose 5-phosphate. Lys89 (schiff-base intermediate with D-ribose 5-phosphate) is an active-site residue. Gly161 serves as a coordination point for D-ribose 5-phosphate. Arg173 contacts D-glyceraldehyde 3-phosphate. D-ribose 5-phosphate is bound by residues Gly222 and 243–244 (GS). Residues 276–302 (ASNPGKGMKGEANADLSEGEKLQTRGV) are disordered. A compositionally biased stretch (basic and acidic residues) spans 293–302 (EGEKLQTRGV).

Belongs to the PdxS/SNZ family. In the presence of PdxT, forms a dodecamer of heterodimers.

It catalyses the reaction aldehydo-D-ribose 5-phosphate + D-glyceraldehyde 3-phosphate + L-glutamine = pyridoxal 5'-phosphate + L-glutamate + phosphate + 3 H2O + H(+). The protein operates within cofactor biosynthesis; pyridoxal 5'-phosphate biosynthesis. Its function is as follows. Catalyzes the formation of pyridoxal 5'-phosphate from ribose 5-phosphate (RBP), glyceraldehyde 3-phosphate (G3P) and ammonia. The ammonia is provided by the PdxT subunit. Can also use ribulose 5-phosphate and dihydroxyacetone phosphate as substrates, resulting from enzyme-catalyzed isomerization of RBP and G3P, respectively. This Haloquadratum walsbyi (strain DSM 16790 / HBSQ001) protein is Pyridoxal 5'-phosphate synthase subunit PdxS.